Reading from the N-terminus, the 319-residue chain is Acetyl-coenzyme A carboxylase carboxyl transferase subunit alpha (319 aa).

Residues 38–293 (HALQDKLRMR…KAVLLNELDA (256 aa)) form the CoA carboxyltransferase C-terminal domain.

The protein belongs to the AccA family. As to quaternary structure, acetyl-CoA carboxylase is a heterohexamer composed of biotin carboxyl carrier protein (AccB), biotin carboxylase (AccC) and two subunits each of ACCase subunit alpha (AccA) and ACCase subunit beta (AccD).

Its subcellular location is the cytoplasm. It carries out the reaction N(6)-carboxybiotinyl-L-lysyl-[protein] + acetyl-CoA = N(6)-biotinyl-L-lysyl-[protein] + malonyl-CoA. Its pathway is lipid metabolism; malonyl-CoA biosynthesis; malonyl-CoA from acetyl-CoA: step 1/1. Component of the acetyl coenzyme A carboxylase (ACC) complex. First, biotin carboxylase catalyzes the carboxylation of biotin on its carrier protein (BCCP) and then the CO(2) group is transferred by the carboxyltransferase to acetyl-CoA to form malonyl-CoA. This chain is Acetyl-coenzyme A carboxylase carboxyl transferase subunit alpha, found in Stenotrophomonas maltophilia (strain K279a).